Reading from the N-terminus, the 1692-residue chain is Fatty acid synthase alpha subunit hexA (1692 aa).

Residues 44–80 form a disordered region; it reads AVEEPVDETPAPETAPERPPLSRAKTAAVKPQETAAP. The 85-residue stretch at 90–174 folds into the Carrier domain; the sequence is LSAEEIVRAL…RVSSALLSKL (85 aa). Ser-125 carries the O-(pantetheine 4'-phosphoryl)serine modification. The interval 508-746 is ketoreductase (KR) domain; it reads FAGKNILITG…IAMLMTPELV (239 aa). The Ketosynthase family 3 (KS3) domain occupies 948-1430; it reads KEYLHEVAVE…QKGGQVVGVA (483 aa). Residue Cys-1135 is the For beta-ketoacyl synthase activity of the active site. Positions 1263-1287 are disordered; that stretch reads GQAQLDKSSPSTNTTSRTSSVSLAR. The segment covering 1270-1284 has biased composition (low complexity); it reads SSPSTNTTSRTSSVS. Catalysis depends on for beta-ketoacyl synthase activity residues His-1315 and His-1356. Mg(2+) is bound at residue Asp-1569. Acetyl-CoA is bound by residues 1569–1571, 1615–1625, 1639–1642, and 1668–1670; these read DLV, EAVFKCLHTQT, KSDN, and ISH. Mg(2+) is bound at residue Ser-1669.

Belongs to the thiolase-like superfamily. Fungal fatty acid synthetase subunit alpha family. In terms of assembly, [Alpha(6)beta(6)] hexamers of two multifunctional subunits (alpha and beta). 4'-phosphopantetheine is transferred from CoA to a specific serine of the acyl carrier domain by the C-terminal PPT domain. This modification is essential for activity because fatty acids are bound in thioester linkage to the sulfhydryl of the prosthetic group.

It catalyses the reaction acetyl-CoA + n malonyl-CoA + 2n NADPH + 4n H(+) = a long-chain-acyl-CoA + n CoA + n CO2 + 2n NADP(+).. The catalysed reaction is a fatty acyl-[ACP] + malonyl-[ACP] + H(+) = a 3-oxoacyl-[ACP] + holo-[ACP] + CO2. The enzyme catalyses a (3R)-hydroxyacyl-[ACP] + NADP(+) = a 3-oxoacyl-[ACP] + NADPH + H(+). Its pathway is mycotoxin biosynthesis. Its function is as follows. Fatty acid synthase alpha subunit; part of the fragmented gene cluster that mediates the biosynthesis of dothistromin (DOTH), a polyketide toxin very similar in structure to the aflatoxin precursor, versicolorin B. The first step of the pathway is the conversion of acetate to norsolorinic acid (NOR) and requires the fatty acid synthase subunits hexA and hexB, as well as the polyketide synthase pksA. PksA combines a hexanoyl starter unit and 7 malonyl-CoA extender units to synthesize the precursor NOR. The hexanoyl starter unit is provided to the acyl-carrier protein (ACP) domain by the fungal fatty acid synthase hexA/hexB. The second step is the conversion of NOR to averantin (AVN) and requires the norsolorinic acid ketoreductase nor1, which catalyzes the dehydration of norsolorinic acid to form (1'S)-averantin. The cytochrome P450 monooxygenase avnA then catalyzes the hydroxylation of AVN to 5'hydroxyaverantin (HAVN). The next step is performed by adhA that transforms HAVN to averufin (AVF). Averufin might then be converted to hydroxyversicolorone by cypX and avfA. Hydroxyversicolorone is further converted versiconal hemiacetal acetate (VHA) by moxY. VHA is then the substrate for the versiconal hemiacetal acetate esterase est1 to yield versiconal (VAL). Versicolorin B synthase vbsA then converts VAL to versicolorin B (VERB) by closing the bisfuran ring. Then, the activity of the versicolorin B desaturase verB leads to versicolorin A (VERA). DotB, a predicted chloroperoxidase, may perform epoxidation of the A-ring of VERA. Alternatively, a cytochrome P450, such as cypX or avnA could catalyze this step. It is also possible that another, uncharacterized, cytochrome P450 enzyme is responsible for this step. Opening of the epoxide could potentially be achieved by the epoxide hydrolase epoA. However, epoA seems not to be required for DOTH biosynthesis, but other epoxide hydrolases may have the ability to complement this hydrolysis. Alternatively, opening of the epoxide ring could be achieved non-enzymatically. The next step is the deoxygenation of ring A to yield the 5,8-dihydroxyanthraquinone which is most likely catalyzed by the NADPH dehydrogenase encoded by ver1. The last stages of DOTH biosynthesis are proposed to involve hydroxylation of the bisfuran. OrdB and norB might have oxidative roles here. An alternative possibility is that cytochrome P450 monoogenases such as avnA and cypX might perform these steps in addition to previously proposed steps. The sequence is that of Fatty acid synthase alpha subunit hexA from Dothistroma septosporum (strain NZE10 / CBS 128990) (Red band needle blight fungus).